We begin with the raw amino-acid sequence, 45 residues long: Photosystem II reaction center protein K (45 aa).

A propeptide spanning residues 1-8 (MITAIIIA) is cleaved from the precursor. A helical membrane pass occupies residues 23–43 (ILPVIPIFFLLLAFVWQAAIG).

The protein belongs to the PsbK family. PSII is composed of 1 copy each of membrane proteins PsbA, PsbB, PsbC, PsbD, PsbE, PsbF, PsbH, PsbI, PsbJ, PsbK, PsbL, PsbM, PsbT, PsbX, PsbY, PsbZ, Psb30/Ycf12, at least 3 peripheral proteins of the oxygen-evolving complex and a large number of cofactors. It forms dimeric complexes.

Its subcellular location is the plastid. It localises to the chloroplast thylakoid membrane. In terms of biological role, one of the components of the core complex of photosystem II (PSII). PSII is a light-driven water:plastoquinone oxidoreductase that uses light energy to abstract electrons from H(2)O, generating O(2) and a proton gradient subsequently used for ATP formation. It consists of a core antenna complex that captures photons, and an electron transfer chain that converts photonic excitation into a charge separation. This Gracilaria tenuistipitata var. liui (Red alga) protein is Photosystem II reaction center protein K.